A 206-amino-acid chain; its full sequence is Hypoxanthine-guanine phosphoribosyltransferase (206 aa).

Residues 110 to 118, Lys-154, and 181 to 187 each bind GMP; these read DEVDDTRTT and WIMYPWE. Asp-114 functions as the Proton acceptor in the catalytic mechanism.

Belongs to the purine/pyrimidine phosphoribosyltransferase family. In terms of assembly, dimer. Requires Mg(2+) as cofactor.

It localises to the endoplasmic reticulum. It catalyses the reaction IMP + diphosphate = hypoxanthine + 5-phospho-alpha-D-ribose 1-diphosphate. It carries out the reaction GMP + diphosphate = guanine + 5-phospho-alpha-D-ribose 1-diphosphate. Its function is as follows. Converts guanine to guanosine monophosphate, and hypoxanthine to inosine monophosphate. Transfers the 5-phosphoribosyl group from 5-phosphoribosylpyrophosphate onto the purine. Plays a central role in the generation of purine nucleotides through the purine salvage pathway. This Schizosaccharomyces pombe (strain 972 / ATCC 24843) (Fission yeast) protein is Hypoxanthine-guanine phosphoribosyltransferase (hpt1).